Consider the following 495-residue polypeptide: Formin-like protein 17 (495 aa).

The tract at residues 1-92 (MDIRELIDIT…HNLKGQGQTR (92 aa)) is disordered. Residues 19-29 (GPPPPPPPPLL) show a composition bias toward pro residues. The span at 30–39 (QPHHSALSSS) shows a compositional bias: low complexity. Residues 86–486 (KGQGQTRKAN…RAQKEAENEK (401 aa)) enclose the FH2 domain.

This sequence belongs to the formin-like family. Class-II subfamily.

In Arabidopsis thaliana (Mouse-ear cress), this protein is Formin-like protein 17 (FH17).